We begin with the raw amino-acid sequence, 166 residues long: Disulfide bond formation protein B (166 aa).

The Cytoplasmic portion of the chain corresponds to 1 to 11 (MCNKLFAGRRG). A helical transmembrane segment spans residues 12 to 28 (YFLGFVASFGLVGLALF). Over 29 to 46 (LQQKYNLEPCPLCISQRI) the chain is Periplasmic. The cysteines at positions 38 and 41 are disulfide-linked. A helical membrane pass occupies residues 47–63 (AFMALGILFLLAALHNP). At 64–69 (GRVGRK) the chain is on the cytoplasmic side. A helical transmembrane segment spans residues 70-87 (VYGLLHVIAAATGIGIAA). Over 88–144 (RHIWIQANPDKVMAECGAGFDYIMETFPLKKALDLIFKGTGECSAIDWTLFGLTIPQ) the chain is Periplasmic. A disulfide bond links C103 and C130. A helical transmembrane segment spans residues 145 to 163 (LSLIAFVGLGLFAVLLAFH). The Cytoplasmic portion of the chain corresponds to 164–166 (KKA).

It belongs to the DsbB family.

The protein localises to the cell inner membrane. Required for disulfide bond formation in some periplasmic proteins. Acts by oxidizing the DsbA protein. This Methylobacillus flagellatus (strain ATCC 51484 / DSM 6875 / VKM B-1610 / KT) protein is Disulfide bond formation protein B.